The primary structure comprises 401 residues: Ornithine aminotransferase (401 aa).

An N6-(pyridoxal phosphate)lysine modification is found at lysine 258.

This sequence belongs to the class-III pyridoxal-phosphate-dependent aminotransferase family. OAT subfamily. Pyridoxal 5'-phosphate serves as cofactor.

It is found in the cytoplasm. The enzyme catalyses a 2-oxocarboxylate + L-ornithine = L-glutamate 5-semialdehyde + an L-alpha-amino acid. It participates in amino-acid biosynthesis; L-proline biosynthesis; L-glutamate 5-semialdehyde from L-ornithine: step 1/1. Functionally, catalyzes the interconversion of ornithine to glutamate semialdehyde. The protein is Ornithine aminotransferase of Bacillus subtilis (strain 168).